Consider the following 203-residue polypeptide: Guanylate kinase (203 aa).

The 179-residue stretch at 3–181 (GTLYIVSAPS…ALDDLKAIFR (179 aa)) folds into the Guanylate kinase-like domain. Position 10–17 (10–17 (APSGAGKT)) interacts with ATP.

Belongs to the guanylate kinase family.

The protein localises to the cytoplasm. It catalyses the reaction GMP + ATP = GDP + ADP. Its function is as follows. Essential for recycling GMP and indirectly, cGMP. This chain is Guanylate kinase (gmk), found in Pseudomonas aeruginosa (strain ATCC 15692 / DSM 22644 / CIP 104116 / JCM 14847 / LMG 12228 / 1C / PRS 101 / PAO1).